A 679-amino-acid polypeptide reads, in one-letter code: WD repeat-containing protein 48 homolog (679 aa).

WD repeat units lie at residues 26–65, 71–110, 113–152, 164–203, 206–245, 248–287, 290–329, and 349–388; these read QHRNGVNALQLDSNNGKLYSAGRDAIIRVWNTRTEANEKY, HHNDWVNDIVLCCNGRNLISASCDTTVKVWNAHKGFCMST, THRDYVQALAYAKDREQVASAGLDKAIFLWDVNTLTALTA, GSKDSIYSLAMNPSGTVIVSGSTENILRIWDPRTCMRSMK, GHTENVRCLVVSPDGNQVVSGSSDGTIKVWNLGQQRCIQT, VHKEGVWSLLMSENFQYIISGSRDRNIIVTEMRNPSNKML, EEKAPVLSLGYNIDKTGVWATTWNSDIRCWKLPMYDRCVL, and KGGAAIKECTVLNDKRYIITKDSQDQVVVYDVLRVTKKEE. A disordered region spans residues 594 to 615; that stretch reads PSAGNANNSLQNSQSDANSEGS.

Belongs to the WD repeat WDR48 family. As to quaternary structure, catalytic component of the Usp12-46 deubiquitylase complex consisting of Usp12-46, Wdr20 and Uaf1; regulatory subunit that, together wtih Wdr20, stabilizes Usp12-46. The Usp12-46 deubiquitylase complex associates with arr/arrow; the interaction leads to deubiquitination and stabilization of arr/arrow.

In terms of biological role, regulatory component of the Usp12-46 deubiquitylase complex. activates deubiquitination by increasing the catalytic turnover without increasing the affinity of deubiquitinating enzymes for the substrate. The complex deubiquitylates the wg/wingless-signaling receptor arr/arrow, which stabilizes the receptor and increases its concentration at the cell surface; this enhances the sensitivity of cells to wg/wingless-signal stimulation. This increases the amplitude and spatial range of the signaling response to the wg/wingless morphogen gradient, facilitating the precise concentration-dependent regulation of its target genes. Together with Wdr20 and Usp12-46 required for wg/wingless-mediated signaling in the wing imaginal disc and for wg/wingless-dependent regulation of intestinal stem cell proliferation. This Drosophila mojavensis (Fruit fly) protein is WD repeat-containing protein 48 homolog.